The primary structure comprises 526 residues: UDP-N-acetylmuramoyl-L-alanyl-D-glutamate--2,6-diaminopimelate ligase (526 aa).

UDP-N-acetyl-alpha-D-muramoyl-L-alanyl-D-glutamate is bound by residues Leu48 and Ser50. 136–142 (GTSGKTT) is a binding site for ATP. Residues 178–179 (TT), Ser205, and Arg213 contribute to the UDP-N-acetyl-alpha-D-muramoyl-L-alanyl-D-glutamate site. Lys245 is subject to N6-carboxylysine. Residues Arg408, 432–435 (DNPR), Gly490, and Glu494 contribute to the meso-2,6-diaminopimelate site. The Meso-diaminopimelate recognition motif motif lies at 432 to 435 (DNPR).

The protein belongs to the MurCDEF family. MurE subfamily. Mg(2+) serves as cofactor. Carboxylation is probably crucial for Mg(2+) binding and, consequently, for the gamma-phosphate positioning of ATP.

It localises to the cytoplasm. It carries out the reaction UDP-N-acetyl-alpha-D-muramoyl-L-alanyl-D-glutamate + meso-2,6-diaminopimelate + ATP = UDP-N-acetyl-alpha-D-muramoyl-L-alanyl-gamma-D-glutamyl-meso-2,6-diaminopimelate + ADP + phosphate + H(+). It functions in the pathway cell wall biogenesis; peptidoglycan biosynthesis. Functionally, catalyzes the addition of meso-diaminopimelic acid to the nucleotide precursor UDP-N-acetylmuramoyl-L-alanyl-D-glutamate (UMAG) in the biosynthesis of bacterial cell-wall peptidoglycan. The chain is UDP-N-acetylmuramoyl-L-alanyl-D-glutamate--2,6-diaminopimelate ligase from Corynebacterium efficiens (strain DSM 44549 / YS-314 / AJ 12310 / JCM 11189 / NBRC 100395).